Consider the following 165-residue polypeptide: Transcription antitermination protein NusB (165 aa).

Belongs to the NusB family.

Functionally, involved in transcription antitermination. Required for transcription of ribosomal RNA (rRNA) genes. Binds specifically to the boxA antiterminator sequence of the ribosomal RNA (rrn) operons. The protein is Transcription antitermination protein NusB of Chlorobium phaeobacteroides (strain DSM 266 / SMG 266 / 2430).